The chain runs to 159 residues: Ribosomal RNA large subunit methyltransferase H (159 aa).

Residues Leu76, Gly108, and 127–132 (FSKMTL) each bind S-adenosyl-L-methionine.

It belongs to the RNA methyltransferase RlmH family. Homodimer.

It is found in the cytoplasm. It catalyses the reaction pseudouridine(1915) in 23S rRNA + S-adenosyl-L-methionine = N(3)-methylpseudouridine(1915) in 23S rRNA + S-adenosyl-L-homocysteine + H(+). Functionally, specifically methylates the pseudouridine at position 1915 (m3Psi1915) in 23S rRNA. This Bacillus mycoides (strain KBAB4) (Bacillus weihenstephanensis) protein is Ribosomal RNA large subunit methyltransferase H.